Reading from the N-terminus, the 108-residue chain is Thiosulfate sulfurtransferase GlpE (108 aa).

One can recognise a Rhodanese domain in the interval glutamine 18–leucine 106. Catalysis depends on cysteine 66, which acts as the Cysteine persulfide intermediate.

Belongs to the GlpE family.

The protein resides in the cytoplasm. It catalyses the reaction thiosulfate + hydrogen cyanide = thiocyanate + sulfite + 2 H(+). The catalysed reaction is thiosulfate + [thioredoxin]-dithiol = [thioredoxin]-disulfide + hydrogen sulfide + sulfite + 2 H(+). Its function is as follows. Transferase that catalyzes the transfer of sulfur from thiosulfate to thiophilic acceptors such as cyanide or dithiols. May function in a CysM-independent thiosulfate assimilation pathway by catalyzing the conversion of thiosulfate to sulfite, which can then be used for L-cysteine biosynthesis. This Glaesserella parasuis serovar 5 (strain SH0165) (Haemophilus parasuis) protein is Thiosulfate sulfurtransferase GlpE.